A 618-amino-acid polypeptide reads, in one-letter code: Kelch-like protein 40b (618 aa).

A BTB domain is found at 33 to 100 (VDCVLKIKDK…LYTSNINVTE (68 aa)). In terms of domain architecture, BACK spans 135–237 (CLAIFRLGLM…PRDYFVKNVE (103 aa)). Residues 264-284 (PELKKTKNKKSPSEEGQKKGD) are compositionally biased toward basic and acidic residues. A disordered region spans residues 264–297 (PELKKTKNKKSPSEEGQKKGDEEEVEEEEEQEER). Over residues 285–295 (EEEVEEEEEQE) the composition is skewed to acidic residues. Kelch repeat units lie at residues 356–408 (QIFV…EAEN), 409–458 (FIFV…SHNE), 459–506 (MIYV…IHKN), 508–553 (IYVV…SVSG), and 555–608 (LYAV…VLGV).

The protein belongs to the KLHL40 family. Component of the BCR(KLHL40) E3 ubiquitin ligase complex. In terms of tissue distribution, expressed in skeletal muscle. Detected in the eye at much lower levels.

Its subcellular location is the cytoplasm. The protein resides in the myofibril. The protein localises to the sarcomere. It is found in the a band. It localises to the i band. Functionally, substrate-specific adapter of a BCR (BTB-CUL3-RBX1) E3 ubiquitin ligase complex. Required for skeletal muscle development. The sequence is that of Kelch-like protein 40b (klhl40b) from Danio rerio (Zebrafish).